A 356-amino-acid polypeptide reads, in one-letter code: Trans-enoyl reductase pgmF (356 aa).

NADP(+) contacts are provided by residues 57 to 60 (VDFK), 175 to 178 (SGGC), 198 to 201 (STPN), Tyr216, 261 to 262 (VG), and 342 to 343 (AK).

The protein belongs to the zinc-containing alcohol dehydrogenase family.

FAD-linked oxidoreductase; part of the gene cluster that mediates the biosynthesis of pleosporalin A, ascomycone A, as well as a third cryptic naphthoquinone derived pigment, all responsible for the coloration of conidia. The pathway begins with the biosynthesis of the cyclized heptaketide 3-acetonyl-1,6,8-trihydroxy-2-naphthaldehyde by the NR-PKS pgmA. The C-6 hydroxyl group is further methylated by the O-methyltransferase pgmB to yield fusarubinaldehyde which is in turn oxidized by the cytochrome P450 monooxygenase pgmC at C-9. The C-1 hydroxyl group is then methylated spontaneously. Although pgmE, pgmD and pgmH are essential for the production of pleosporalin A, it is not the case for the 2 other final products and it remains difficult to assign a specific function to each enzyme. PgmF and pgmG seem not to be involved in pigment biosynthesis although they were regulated by the cluster-specific transcription factor pgmR. The polypeptide is Trans-enoyl reductase pgmF (Aspergillus terreus).